The sequence spans 427 residues: UPF0229 protein YeaH (427 aa).

Positions 79–90 (NDHFVQNDRIER) are enriched in basic and acidic residues. Positions 79–110 (NDHFVQNDRIERPQGGGGGSGSGQGQASQDGE) are disordered. Residues 92 to 102 (QGGGGGSGSGQ) are compositionally biased toward gly residues.

It belongs to the UPF0229 family.

This is UPF0229 protein YeaH from Escherichia coli (strain K12 / MC4100 / BW2952).